The chain runs to 168 residues: Cell division inhibitor SulA (168 aa).

A ftsZ binding region spans residues 106-112 (ALLTGNY). The interval 161–168 (KIHSSLYH) is lon protease binding.

It belongs to the SulA family. As to quaternary structure, interacts with FtsZ. In terms of processing, is rapidly cleaved and degraded by the Lon protease once DNA damage is repaired.

Its function is as follows. Component of the SOS system and an inhibitor of cell division. Accumulation of SulA causes rapid cessation of cell division and the appearance of long, non-septate filaments. In the presence of GTP, binds a polymerization-competent form of FtsZ in a 1:1 ratio, thus inhibiting FtsZ polymerization and therefore preventing it from participating in the assembly of the Z ring. This mechanism prevents the premature segregation of damaged DNA to daughter cells during cell division. In Serratia proteamaculans (strain 568), this protein is Cell division inhibitor SulA.